The chain runs to 393 residues: Chalcone synthase 3 (393 aa).

Cysteine 166 is a catalytic residue.

Belongs to the thiolase-like superfamily. Chalcone/stilbene synthases family.

It catalyses the reaction (E)-4-coumaroyl-CoA + 3 malonyl-CoA + 3 H(+) = 2',4,4',6'-tetrahydroxychalcone + 3 CO2 + 4 CoA. The protein operates within secondary metabolite biosynthesis; flavonoid biosynthesis. The primary product of this enzyme is 4,2',4',6'-tetrahydroxychalcone (also termed naringenin-chalcone or chalcone) which can under specific conditions spontaneously isomerize into naringenin. The polypeptide is Chalcone synthase 3 (CHS3) (Ruta graveolens (Common rue)).